The sequence spans 279 residues: Protein ABIL4 (279 aa).

2 disordered regions span residues 192 to 211 (VHNN…PMRF) and 219 to 241 (LLKR…EPQR). The segment covering 194–208 (NNINNRTPNKRSNSP) has biased composition (polar residues). Low complexity predominate over residues 219-228 (LLKRSSSPSQ).

Belongs to the ABI family. In terms of assembly, binds SCAR.

The protein localises to the cytoplasm. The protein resides in the cytoskeleton. Involved in regulation of actin and microtubule organization. Part of a WAVE complex that activates the Arp2/3 complex. This is Protein ABIL4 (ABIL4) from Arabidopsis thaliana (Mouse-ear cress).